The chain runs to 1541 residues: Regulator of G-protein signaling loco (1541 aa).

Residues 1 to 66 (MHHHHPPLPI…RRKKRANYNY (66 aa)) are disordered. The segment covering 11 to 36 (TGASGSTAVGTGAAAAEDASPAANSG) has biased composition (low complexity). Positions 40 to 53 (ISTSTTPSGSNSQQ) are enriched in polar residues. In terms of domain architecture, PDZ spans 71–148 (TVEVRRGYNG…SIRMQIAENY (78 aa)). The disordered stretch occupies residues 182-222 (AKLHRLRNSPQKKLNPPEAVEPHKSKSSPDHPTLKPVLEDP). Positions 201 to 214 (VEPHKSKSSPDHPT) are enriched in basic and acidic residues. One can recognise a PID domain in the interval 247-423 (AALECRVIVG…VVNLVRSMYT (177 aa)). Disordered regions lie at residues 449-473 (GAVAAAHSPQPSNHSEISTTTSNSD) and 708-761 (SEPD…ASMN). Composition is skewed to polar residues over residues 457 to 473 (PQPSNHSEISTTTSNSD) and 744 to 761 (EQQQLGQSSPVRRTASMN). Positions 827-943 (SFERMLQDAA…IRSDLYKSCV (117 aa)) constitute an RGS domain. The tract at residues 978 to 1004 (SASNAEDRRRKSLLPWHRKTRSKSRDR) is disordered. The span at 987 to 999 (RKSLLPWHRKTRS) shows a compositional bias: basic residues. RBD domains lie at 1072–1142 (SLCR…IERR) and 1143–1213 (VAFK…IVMV). The interval 1258-1327 (DAAASEKSRP…SEEAATTQAV (70 aa)) is disordered. Residues 1273 to 1285 (MKSNEAPSETSSL) show a composition bias toward polar residues. The span at 1312-1325 (TSSSQQSEEAATTQ) shows a compositional bias: low complexity. The 23-residue stretch at 1354–1376 (QDELLEGLKRAQLARLEDQRGTE) folds into the GoLoco domain. Residues 1410–1513 (KVPATPTEIP…ASKPGTFASK (104 aa)) are disordered. The span at 1460–1469 (APPPLPPKPK) shows a compositional bias: pro residues. A compositionally biased stretch (polar residues) spans 1483–1499 (PTGNYCNKYSPSKQVPT).

Interacts (via GoLoco and RGS domains) with Galphai (via GDP- or GTP-bound forms). As to expression, expressed in surface and longitudinal glial cells, gut and heart (at protein level).

It is found in the cytoplasm. The protein localises to the cell membrane. Its subcellular location is the apical cell membrane. Functionally, acts as a regulator of G protein signaling (RGS). Modulates G protein alpha subunits nucleotide exchange and hydrolysis activities by functioning either as a GTPase-activating protein (GAP), thereby driving G protein alpha subunits into their inactive GDP-bound form, or as a GDP-dissociation inhibitor (GDI). Confers GDI and GAP activities on G(i) alpha subunit Galphai. Confers GAP activity on G(o)-alpha subunit Galphao and G(i) alpha subunit Galphai. Involved in the dorsal-ventral axis formation of the egg. Acts as a G-protein signaling for glial cell differentiation during embryogenesis; Galphai, Galphao and the G-protein coupled receptor, moody, are required in the surface glia to achieve effective insulation of the nerve cord. May be essential for nurse cell dumping during oogenesis. Required in neuroblast asymmetrical cell division. Plays a role in stress resistance and life span control. The chain is Regulator of G-protein signaling loco (loco) from Drosophila melanogaster (Fruit fly).